The sequence spans 168 residues: Phospholipase A and acyltransferase 1 (168 aa).

At 1 to 138 (MAFNDCFSLN…GEGVSEQANR (138 aa)) the chain is on the cytoplasmic side. The region spanning 20–135 (LIEVFRPGYQ…LRYGEGVSEQ (116 aa)) is the LRAT domain. His30 is a catalytic residue. Catalysis depends on Cys119, which acts as the Acyl-thioester intermediate. The helical transmembrane segment at 139–159 (AISTVEFVTAAVGVFSFLGLF) threads the bilayer. Residues 160–168 (PKGQRAKYY) lie on the Lumenal side of the membrane.

The protein belongs to the H-rev107 family. In terms of tissue distribution, abundantly expressed in testis, skeletal muscle, brain, and heart. Highly expressed in the testis, skeletal muscle, brain, heart, and thyroid.

The protein localises to the membrane. It is found in the cytoplasm. Its subcellular location is the nucleus. The catalysed reaction is a 1,2-diacyl-sn-glycero-3-phosphocholine + H2O = a 1-acyl-sn-glycero-3-phosphocholine + a fatty acid + H(+). It carries out the reaction a 1,2-diacyl-sn-glycero-3-phosphocholine + H2O = a 2-acyl-sn-glycero-3-phosphocholine + a fatty acid + H(+). It catalyses the reaction 1,2-dihexadecanoyl-sn-glycero-3-phosphocholine + H2O = 2-hexadecanoyl-sn-glycero-3-phosphocholine + hexadecanoate + H(+). The enzyme catalyses 1,2-dihexadecanoyl-sn-glycero-3-phosphocholine + H2O = 1-hexadecanoyl-sn-glycero-3-phosphocholine + hexadecanoate + H(+). The catalysed reaction is 1-hexadecanoyl-2-(5Z,8Z,11Z,14Z-eicosatetraenoyl)-sn-glycero-3-phosphoethanolamine + H2O = 2-(5Z,8Z,11Z,14Z)-eicosatetraenoyl-sn-glycero-3-phosphoethanolamine + hexadecanoate + H(+). It carries out the reaction 1-hexadecanoyl-2-(5Z,8Z,11Z,14Z-eicosatetraenoyl)-sn-glycero-3-phosphoethanolamine + H2O = 1-hexadecanoyl-sn-glycero-3-phosphoethanolamine + (5Z,8Z,11Z,14Z)-eicosatetraenoate + H(+). It catalyses the reaction 1,2-di-(9Z-octadecenoyl)-sn-glycero-3-phosphoethanolamine + 1,2-dihexadecanoyl-sn-glycero-3-phosphocholine = hexadecanoyl-sn-glycero-3-phosphocholine + N-hexadecanoyl-1,2-di-(9Z-octadecenoyl)-sn-glycero-3-phosphoethanolamine + H(+). The enzyme catalyses 1,2-dihexadecanoyl-sn-glycero-3-phosphocholine + a 2-acyl-sn-glycero-3-phosphocholine = a 1-hexadecanoyl-2-acyl-sn-glycero-3-phosphocholine + 2-hexadecanoyl-sn-glycero-3-phosphocholine. In terms of biological role, exhibits both phospholipase A1/2 and acyltransferase activities. Shows phospholipase A1 (PLA1) and A2 (PLA2) activity, catalyzing the calcium-independent release of fatty acids from the sn-1 or sn-2 position of glycerophospholipids. Shows O-acyltransferase activity, catalyzing the transfer of a fatty acyl group from glycerophospholipid to the hydroxyl group of lysophospholipid. Shows N-acyltransferase activity, catalyzing the calcium-independent transfer of a fatty acyl group at the sn-1 position of phosphatidylcholine (PC) and other glycerophospholipids to the primary amine of phosphatidylethanolamine (PE), forming N-acylphosphatidylethanolamine (NAPE) which serves as precursor for N-acylethanolamines (NAEs). The chain is Phospholipase A and acyltransferase 1 from Homo sapiens (Human).